A 141-amino-acid polypeptide reads, in one-letter code: Galactose-6-phosphate isomerase subunit LacA (141 aa).

It belongs to the LacAB/RpiB family. Heteromultimeric protein consisting of LacA and LacB.

It carries out the reaction aldehydo-D-galactose 6-phosphate = keto-D-tagatose 6-phosphate. It functions in the pathway carbohydrate metabolism; D-galactose 6-phosphate degradation; D-tagatose 6-phosphate from D-galactose 6-phosphate: step 1/1. The chain is Galactose-6-phosphate isomerase subunit LacA from Streptococcus pneumoniae serotype 4 (strain ATCC BAA-334 / TIGR4).